The following is a 339-amino-acid chain: Phenylalanine--tRNA ligase alpha subunit (339 aa).

Residues methionine 1–glutamine 14 show a composition bias toward basic and acidic residues. Residues methionine 1–threonine 20 form a disordered region. Glutamate 254 provides a ligand contact to Mg(2+).

It belongs to the class-II aminoacyl-tRNA synthetase family. Phe-tRNA synthetase alpha subunit type 1 subfamily. Tetramer of two alpha and two beta subunits. The cofactor is Mg(2+).

It localises to the cytoplasm. The catalysed reaction is tRNA(Phe) + L-phenylalanine + ATP = L-phenylalanyl-tRNA(Phe) + AMP + diphosphate + H(+). This Alkaliphilus metalliredigens (strain QYMF) protein is Phenylalanine--tRNA ligase alpha subunit.